The chain runs to 47 residues: Large ribosomal subunit protein bL27c-2 (47 aa).

This sequence belongs to the bacterial ribosomal protein bL27 family.

The protein resides in the plastid. Its subcellular location is the chloroplast. This chain is Large ribosomal subunit protein bL27c-2, found in Cyanidium caldarium (Red alga).